The primary structure comprises 65 residues: Large ribosomal subunit protein bL35 (65 aa).

The tract at residues 30-65 (AFRSHLAQNKSTKQKRQSKHGTFMHPTDYKRLKDLM) is disordered. Basic and acidic residues predominate over residues 56-65 (TDYKRLKDLM).

The protein belongs to the bacterial ribosomal protein bL35 family.

This Mycoplasma mobile (strain ATCC 43663 / 163K / NCTC 11711) (Mesomycoplasma mobile) protein is Large ribosomal subunit protein bL35.